The chain runs to 904 residues: uncharacterized protein (904 aa).

2 disordered regions span residues 247-275 (KIGK…SLEF) and 328-360 (GDSQ…HHFS). A compositionally biased stretch (polar residues) spans 342–360 (GAQTLSPTSHPSSANHHFS). A helical transmembrane segment spans residues 778-798 (VVQGMILMFAGGKLIFGGRVL).

The protein localises to the membrane. This is an uncharacterized protein from Homo sapiens (Human).